Consider the following 431-residue polypeptide: Enolase (431 aa).

Glutamine 167 contacts (2R)-2-phosphoglycerate. The Proton donor role is filled by glutamate 209. Residues aspartate 246, glutamate 289, and aspartate 316 each contribute to the Mg(2+) site. (2R)-2-phosphoglycerate is bound by residues lysine 341, arginine 370, serine 371, and lysine 392. Catalysis depends on lysine 341, which acts as the Proton acceptor.

The protein belongs to the enolase family. As to quaternary structure, component of the RNA degradosome, a multiprotein complex involved in RNA processing and mRNA degradation. Requires Mg(2+) as cofactor.

The protein localises to the cytoplasm. Its subcellular location is the secreted. It localises to the cell surface. The enzyme catalyses (2R)-2-phosphoglycerate = phosphoenolpyruvate + H2O. Its pathway is carbohydrate degradation; glycolysis; pyruvate from D-glyceraldehyde 3-phosphate: step 4/5. In terms of biological role, catalyzes the reversible conversion of 2-phosphoglycerate (2-PG) into phosphoenolpyruvate (PEP). It is essential for the degradation of carbohydrates via glycolysis. This is Enolase from Marinobacter nauticus (strain ATCC 700491 / DSM 11845 / VT8) (Marinobacter aquaeolei).